The following is a 209-amino-acid chain: Urease accessory protein UreE (209 aa).

A compositionally biased stretch (basic and acidic residues) spans 170-196; that stretch reads EHHGHSHSHSHDHDHDHDHDHDHDHQH. A disordered region spans residues 170–209; that stretch reads EHHGHSHSHSHDHDHDHDHDHDHDHQHGPSCSHGHHHGHR.

The protein belongs to the UreE family.

It localises to the cytoplasm. Its function is as follows. Involved in urease metallocenter assembly. Binds nickel. Probably functions as a nickel donor during metallocenter assembly. The polypeptide is Urease accessory protein UreE (Burkholderia mallei (strain NCTC 10247)).